We begin with the raw amino-acid sequence, 651 residues long: Protein EXECUTER 2, chloroplastic (651 aa).

The transit peptide at M1–N69 directs the protein to the chloroplast. The region spanning E103–D138 is the UVR domain. A disordered region spans residues D330–S359.

Its subcellular location is the plastid. The protein resides in the chloroplast. In terms of biological role, together with EX1, enables higher plants to perceive singlet oxygen as a stress signal in plastid that activates a genetically determined nuclear stress response program which triggers a programmed cell death (PCD). This transfer of singlet oxygen-induced stress-related signals from the plastid to the nucleus that triggers genetically controlled PCD pathway is unique to photosynthetic eukaryotes and operates under mild stress conditions, impeding photosystem II (PSII) without causing photooxidative damage of the plant. The sequence is that of Protein EXECUTER 2, chloroplastic from Arabidopsis thaliana (Mouse-ear cress).